We begin with the raw amino-acid sequence, 344 residues long: Biotin synthase (344 aa).

The region spanning 40–267 (AEVQVSTLLS…KSMVRLSAGR (228 aa)) is the Radical SAM core domain. [4Fe-4S] cluster is bound by residues Cys55, Cys59, and Cys62. [2Fe-2S] cluster-binding residues include Cys99, Cys130, Cys190, and Arg262.

This sequence belongs to the radical SAM superfamily. Biotin synthase family. As to quaternary structure, homodimer. The cofactor is [4Fe-4S] cluster. [2Fe-2S] cluster is required as a cofactor.

It catalyses the reaction (4R,5S)-dethiobiotin + (sulfur carrier)-SH + 2 reduced [2Fe-2S]-[ferredoxin] + 2 S-adenosyl-L-methionine = (sulfur carrier)-H + biotin + 2 5'-deoxyadenosine + 2 L-methionine + 2 oxidized [2Fe-2S]-[ferredoxin]. The protein operates within cofactor biosynthesis; biotin biosynthesis; biotin from 7,8-diaminononanoate: step 2/2. Catalyzes the conversion of dethiobiotin (DTB) to biotin by the insertion of a sulfur atom into dethiobiotin via a radical-based mechanism. The sequence is that of Biotin synthase from Xanthomonas campestris pv. campestris (strain 8004).